The chain runs to 24 residues: U4-ctenitoxin-Co1b (24 aa).

Post-translationally, disulfide bonds are present. In terms of tissue distribution, expressed by the venom gland.

It is found in the secreted. Omega-agatoxins are antagonists of voltage-gated calcium channels (Cav). This chain is U4-ctenitoxin-Co1b, found in Ctenus ornatus (Brazilian spider).